The following is a 585-amino-acid chain: Mitochondrial translation ATP-dependent RNA helicase mrh5 (585 aa).

Residues 87–117 (PKFHELPLNQNILDGLSTNFAEYKNSTPLQQ) carry the Q motif motif. Residues 121–351 (NALMKSGVSF…SRYITDQLGI (231 aa)) form the Helicase ATP-binding domain. Residue 134 to 141 (GWNGSGKS) coordinates ATP. A DEAD box motif is present at residues 261-264 (DESD). The Helicase C-terminal domain maps to 390 to 584 (NLPYEFVRFN…PKSYEFDDEH (195 aa)).

It belongs to the DEAD box helicase family. In terms of assembly, component of the MRH5C complex, composed of mrh5, ppr4, mtf2, and sls1. Proteins mtf2 and sls1 form a subcomplex that serves as a scaffold to bring mrh5 and ppr4 together. The MRH5C complex associates with the small subunit of the mitochondrial ribosome.

It localises to the mitochondrion. The enzyme catalyses ATP + H2O = ADP + phosphate + H(+). Its function is as follows. Translation activation factor that as part of the MRH5C complex specifically recruits cox1 mRNA to the mitochondrial ribosome for translation initiation. The polypeptide is Mitochondrial translation ATP-dependent RNA helicase mrh5 (Schizosaccharomyces pombe (strain 972 / ATCC 24843) (Fission yeast)).